We begin with the raw amino-acid sequence, 349 residues long: GATA zinc finger domain-containing protein 24 (349 aa).

2 stretches are compositionally biased toward low complexity: residues 95–169 (NINR…VNKN) and 177–195 (NKSC…NNNS). 2 disordered regions span residues 95 to 227 (NINR…PVIK) and 250 to 294 (DYDY…KPVQ). Basic and acidic residues predominate over residues 196 to 212 (ENKEKNNINNNNEKENN). Residues 257-272 (SNESSSPTLSASTLSS) are compositionally biased toward low complexity. The segment covering 278-289 (KVLKRGRGRPSK) has biased composition (basic residues). The GATA-type zinc finger occupies 295 to 323 (CFSCFRSNTPEWRKGKDKDGNVIDLCNAC).

The protein is GATA zinc finger domain-containing protein 24 (gtaX) of Dictyostelium discoideum (Social amoeba).